The following is a 388-amino-acid chain: Probable proton-coupled zinc antiporter SLC30A3 (388 aa).

The interval 1–42 (MEPSPASGGSETTRLVSPRDRSSAGGGLRLKSLFTEPSEPLP) is disordered. The Cytoplasmic segment spans residues 1-75 (MEPSPASGGS…SPERAQARRQ (75 aa)). Phosphoserine occurs at positions 63 and 66. Residues 76 to 96 (LYAACVVCFIFMAGEVVGGYL) form a helical membrane-spanning segment. The Lumenal segment spans residues 97–105 (AHSLAIMTD). Residues 106 to 126 (AAHLLADIGSMMASLFSLWLS) traverse the membrane as a helical segment. Residues H108 and D112 each contribute to the Zn(2+) site. Residues 127 to 145 (TRPATRTMTFGWHRSETLG) lie on the Cytoplasmic side of the membrane. Residues 146–166 (ALASVVSLWIVTGILLYLAFL) traverse the membrane as a helical segment. At 167 to 177 (RLLHSDYHIEA) the chain is on the lumenal side. A helical membrane pass occupies residues 178 to 198 (GAMLLTASIAVCANMIMAFVL). Residues 199–235 (HQTGAPHSHGPRGAEYAPLEEGHGHPLSLGNTSVRAA) are Cytoplasmic-facing. A helical membrane pass occupies residues 236–256 (FVHVLGDLLQSLGVLAASILI). The Zn(2+) site is built by H238 and D242. Residues 257-263 (YFKPQYK) lie on the Lumenal side of the membrane. Residues 264–284 (VADPISTFLFSICALGSTAPT) traverse the membrane as a helical segment. Residues 285 to 388 (LRDVLLVLME…CLRCREPPKA (104 aa)) lie on the Cytoplasmic side of the membrane.

This sequence belongs to the cation diffusion facilitator (CDF) transporter (TC 2.A.4) family. SLC30A subfamily. In terms of assembly, homodimer. Homodimerization could regulate efficiency of zinc transport. Interacts with TMEM163.

Its subcellular location is the cytoplasmic vesicle. It is found in the secretory vesicle. The protein resides in the synaptic vesicle membrane. It localises to the synapse. The protein localises to the synaptosome. Its subcellular location is the late endosome membrane. It is found in the lysosome membrane. The enzyme catalyses Zn(2+)(in) + 2 H(+)(out) = Zn(2+)(out) + 2 H(+)(in). Its function is as follows. Probable proton-coupled zinc ion antiporter mediating the import of zinc from cytoplasm into synaptic vesicles and participating to cellular zinc ion homeostasis in the brain. The protein is Probable proton-coupled zinc antiporter SLC30A3 of Rattus norvegicus (Rat).